The primary structure comprises 469 residues: Zinc finger and BTB domain-containing protein 8A.1-B (469 aa).

The BTB domain maps to 24 to 92; that stretch reads CDCHIIVEGQ…VYSGKLPLSG (69 aa). C2H2-type zinc fingers lie at residues 315 to 337 and 343 to 366; these read FKCP…LRCH and YPCE…QTIH.

The protein localises to the nucleus. Functionally, may be involved in transcriptional regulation. The chain is Zinc finger and BTB domain-containing protein 8A.1-B (zbtb8a.1-b) from Xenopus laevis (African clawed frog).